Here is a 477-residue protein sequence, read N- to C-terminus: Metallopeptidase AprA (477 aa).

A signal peptide spans 1-20 (MSKAKDKAIVSAAQASTAYS). H183 contributes to the Zn(2+) binding site. Residue E184 is part of the active site. H187 and H193 together coordinate Zn(2+). Ca(2+)-binding residues include R264, G266, T268, D296, G298, G299, D301, T338, E340, G345, G347, D349, N354, A356, N358, G362, G363, A364, G365, D367, G371, A372, G373, G374, D376, G380, G381, A382, G383, D385, D394, D401, D411, D453, S455, and D461. 3 Hemolysin-type calcium-binding repeats span residues 343-360 (FGGAGNDLIIGNNAANVI), 361-378 (KGGAGNDLIYGAGGADQL), and 379-391 (WGGAGNDTFVFGA).

The protein belongs to the peptidase M10B family. Requires Ca(2+) as cofactor. Zn(2+) serves as cofactor.

The protein localises to the secreted. With respect to regulation, is completely inhibited by the metal cation chelators 1,10-phenanthroline and EDTA, but PMSF, pepstatin A and E-64 have no effect on activity. Functionally, peptidase able to cleave azocasein and the milk substrates beta-casein and Na-caseinate. Can withstand UHT processing of milk, and is able to spoil UHT milk over the storage period. The polypeptide is Metallopeptidase AprA (Pseudomonas marginalis (Pseudomonas panacis)).